The primary structure comprises 421 residues: Testin (421 aa).

The PET domain occupies 92-199 (MILTNPVAAK…GDVKLPCEMD (108 aa)). Positions 133–164 (EKQPVAGSEGAQYRKKQLAKQLPAHDQDPSKC) are disordered. Basic and acidic residues predominate over residues 155-164 (PAHDQDPSKC). LIM zinc-binding domains follow at residues 234–297 (YSCY…CDSE), 299–359 (PRCA…NHAV), and 362–421 (QGCH…KMMS).

The protein belongs to the prickle / espinas / testin family. As to quaternary structure, interacts via LIM domain 1 with ZYX. Interacts (via LIM domain 3) with ENAH and VASP. Interacts with ALKBH4, talin, actin, alpha-actinin, GRIP1 and PXN. Interacts (via LIM domain 2) with ACTL7A (via N-terminus). Heterodimer with ACTL7A; the heterodimer interacts with ENAH to form a heterotrimer.

It localises to the cytoplasm. The protein resides in the cell junction. Its subcellular location is the focal adhesion. Scaffold protein that may play a role in cell adhesion, cell spreading and in the reorganization of the actin cytoskeleton. Plays a role in the regulation of cell proliferation. May act as a tumor suppressor. This chain is Testin (TES), found in Colobus guereza (Mantled guereza).